The following is a 373-amino-acid chain: Glutamine synthetase (373 aa).

Ala2 carries the N-acetylalanine modification. Residues Ala2 to Lys25 are required for glutamine-induced ubiquitination by CRL4(CRBN) and proteasomal degradation. Residues Lys11 and Lys14 each carry the N6-acetyllysine modification. The GS beta-grasp domain occupies Glu24 to Arg106. Position 104 is a phosphotyrosine (Tyr104). One can recognise a GS catalytic domain in the interval Leu113–Asn373. Glu134 lines the ATP pocket. Mn(2+) is bound by residues Glu134, Glu136, Glu196, and Glu203. Residue Glu203–Pro208 coordinates ATP. Asn246–Trp247 provides a ligand contact to L-glutamate. His253 lines the Mn(2+) pocket. Residues Asn255 to Ser257, Arg319, and Arg324 each bind ATP. Residue Arg319 participates in L-glutamate binding. Tyr336–Glu338 is a binding site for ADP. Position 338 (Glu338) interacts with Mn(2+). Residue Arg340 coordinates L-glutamate. A Phosphoserine modification is found at Ser343.

This sequence belongs to the glutamine synthetase family. In terms of assembly, decamer; composed of two pentamers. Interacts with PALMD. Interacts with RHOJ. Interacts with BEST2; this interaction tethers a fraction of GLUL to the membrane, causing a decrease of cytosolic glutamine synthase (GS) activity and inhibits the chloride channel activity of BEST2 by affecting the gating at the aperture in the absence of intracellular glutamate. Mg(2+) is required as a cofactor. Requires Mn(2+) as cofactor. Acetylated by EP300/p300; acetylation is stimulated by increased glutamine levels and promotes ubiquitin-mediated proteasomal degradation. Post-translationally, palmitoylated; undergoes autopalmitoylation. In terms of processing, ubiquitinated by ZNRF1. Ubiquitinated by the DCX (DDB1-CUL4-X-box) E3 ubiquitin-protein ligase complex called CRL4(CRBN), leading to proteasomal degradation. In terms of tissue distribution, expressed in microvascular endothelial cells.

The protein localises to the cytoplasm. It is found in the cytosol. It localises to the microsome. The protein resides in the mitochondrion. Its subcellular location is the cell membrane. It carries out the reaction L-glutamate + NH4(+) + ATP = L-glutamine + ADP + phosphate + H(+). It catalyses the reaction L-cysteinyl-[protein] + hexadecanoyl-CoA = S-hexadecanoyl-L-cysteinyl-[protein] + CoA. Its activity is regulated as follows. Glutamine synthetase activity is inhibited by methionine sulfoximine (MSO). Glutamine synthetase that catalyzes the ATP-dependent conversion of glutamate and ammonia to glutamine. Its role depends on tissue localization: in the brain, it regulates the levels of toxic ammonia and converts neurotoxic glutamate to harmless glutamine, whereas in the liver, it is one of the enzymes responsible for the removal of ammonia. Plays a key role in ammonium detoxification during erythropoiesis: the glutamine synthetase activity is required to remove ammonium generated by porphobilinogen deaminase (HMBS) during heme biosynthesis to prevent ammonium accumulation and oxidative stress. Essential for proliferation of fetal skin fibroblasts. Independently of its glutamine synthetase activity, required for endothelial cell migration during vascular development. Involved in angiogenesis by regulating membrane localization and activation of the GTPase RHOJ, possibly by promoting RHOJ palmitoylation. May act as a palmitoyltransferase for RHOJ: able to autopalmitoylate and then transfer the palmitoyl group to RHOJ. Plays a role in ribosomal 40S subunit biogenesis. Through the interaction with BEST2, inhibits BEST2 channel activity by affecting the gating at the aperture in the absence of intracellular L-glutamate, but sensitizes BEST2 to intracellular L-glutamate, which promotes the opening of BEST2 and thus relieves its inhibitory effect on BEST2. This chain is Glutamine synthetase, found in Mus musculus (Mouse).